The primary structure comprises 135 residues: NAD(P)H-quinone oxidoreductase subunit 3 (135 aa).

3 consecutive transmembrane segments (helical) span residues 15 to 35, 79 to 99, and 104 to 124; these read IVFF…SSLV, MFAL…PWAV, and LGLL…VALV.

Belongs to the complex I subunit 3 family. As to quaternary structure, NDH-1 can be composed of about 15 different subunits; different subcomplexes with different compositions have been identified which probably have different functions.

It localises to the cellular thylakoid membrane. It catalyses the reaction a plastoquinone + NADH + (n+1) H(+)(in) = a plastoquinol + NAD(+) + n H(+)(out). It carries out the reaction a plastoquinone + NADPH + (n+1) H(+)(in) = a plastoquinol + NADP(+) + n H(+)(out). NDH-1 shuttles electrons from an unknown electron donor, via FMN and iron-sulfur (Fe-S) centers, to quinones in the respiratory and/or the photosynthetic chain. The immediate electron acceptor for the enzyme in this species is believed to be plastoquinone. Couples the redox reaction to proton translocation, and thus conserves the redox energy in a proton gradient. Cyanobacterial NDH-1 also plays a role in inorganic carbon-concentration. This chain is NAD(P)H-quinone oxidoreductase subunit 3, found in Trichodesmium erythraeum (strain IMS101).